Consider the following 76-residue polypeptide: ATP synthase subunit c (76 aa).

Helical transmembrane passes span 13 to 33 (LNVV…GILI) and 55 to 75 (FLGL…AFIF).

Belongs to the ATPase C chain family. F-type ATPases have 2 components, F(1) - the catalytic core - and F(0) - the membrane proton channel. F(1) has five subunits: alpha(3), beta(3), gamma(1), delta(1), epsilon(1). F(0) has three main subunits: a(1), b(2) and c(10-14). The alpha and beta chains form an alternating ring which encloses part of the gamma chain. F(1) is attached to F(0) by a central stalk formed by the gamma and epsilon chains, while a peripheral stalk is formed by the delta and b chains.

It is found in the cell membrane. Functionally, f(1)F(0) ATP synthase produces ATP from ADP in the presence of a proton or sodium gradient. F-type ATPases consist of two structural domains, F(1) containing the extramembraneous catalytic core and F(0) containing the membrane proton channel, linked together by a central stalk and a peripheral stalk. During catalysis, ATP synthesis in the catalytic domain of F(1) is coupled via a rotary mechanism of the central stalk subunits to proton translocation. Key component of the F(0) channel; it plays a direct role in translocation across the membrane. A homomeric c-ring of between 10-14 subunits forms the central stalk rotor element with the F(1) delta and epsilon subunits. The polypeptide is ATP synthase subunit c (Bifidobacterium animalis subsp. lactis (strain AD011)).